The following is an 867-amino-acid chain: Piwi-like protein 1 (867 aa).

Basic residues predominate over residues 1-11; it reads MTGRARARARG. Positions 1 to 70 are disordered; the sequence is MTGRARARAR…QRGPQDAPKT (70 aa). Positions 28 to 44 are enriched in polar residues; it reads AQKTLPSHPSEQRQSLQ. The PAZ domain occupies 286–397; sequence TVLDFMYSLY…LIPELCYLTG (112 aa). Positions 324-326 are required for binding 2'-O-methylated 3'-end of piRNAs; sequence TYR. The MID region stretch occupies residues 485–621; sequence SRETRVAPLI…LQMNCKMGGE (137 aa). One can recognise a Piwi domain in the interval 561–853; that stretch reads IVVCILSSTR…LAFLVGQSIH (293 aa). Active-site residues include D638, E676, D708, and H842.

Belongs to the argonaute family. Piwi subfamily. Requires Mg(2+) as cofactor. Methylated on arginine residues; required for the interaction with Tudor domain-containing protein and subsequent localization to the meiotic nuage, also named P granule.

Its subcellular location is the cytoplasm. Its function is as follows. Endoribonuclease that plays a central role in postnatal germ cells by repressing transposable elements and preventing their mobilization, which is essential for the germline integrity. Acts via the piRNA metabolic process, which mediates the repression of transposable elements during meiosis by forming complexes composed of piRNAs and Piwi proteins and govern the methylation and subsequent repression of transposons. Directly binds methylated piRNAs, a class of 24 to 30 nucleotide RNAs that are generated by a Dicer-independent mechanism and are primarily derived from transposons and other repeated sequence elements. Strongly prefers a uridine in the first position of their guide (g1U preference, also named 1U-bias). Besides their function in transposable elements repression, piRNAs are probably involved in other processes during meiosis such as translation regulation. Not involved in the piRNA amplification loop, also named ping-pong amplification cycle. Acts as an endoribonuclease that cleaves transposon messenger RNAs. The protein is Piwi-like protein 1 (PIWIL1) of Gallus gallus (Chicken).